The following is a 219-amino-acid chain: Ribose-5-phosphate isomerase A (219 aa).

Residues 28–31 (SGST), 81–84 (DGAD), and 94–97 (KGGG) contribute to the substrate site. The active-site Proton acceptor is the Glu-103. A substrate-binding site is contributed by Lys-121.

It belongs to the ribose 5-phosphate isomerase family. Homodimer.

It catalyses the reaction aldehydo-D-ribose 5-phosphate = D-ribulose 5-phosphate. Its pathway is carbohydrate degradation; pentose phosphate pathway; D-ribose 5-phosphate from D-ribulose 5-phosphate (non-oxidative stage): step 1/1. Catalyzes the reversible conversion of ribose-5-phosphate to ribulose 5-phosphate. The sequence is that of Ribose-5-phosphate isomerase A from Haemophilus influenzae (strain 86-028NP).